A 563-amino-acid polypeptide reads, in one-letter code: Probable ATP-dependent RNA helicase ddx51 (563 aa).

Residues N15–Q43 carry the Q motif motif. One can recognise a Helicase ATP-binding domain in the interval F48–F276. A61 to T68 serves as a coordination point for ATP. A DEAD box motif is present at residues D179 to D182. Residues L308 to R482 enclose the Helicase C-terminal domain. A disordered region spans residues I493–F537. Residues D495 to E510 are compositionally biased toward acidic residues. A compositionally biased stretch (low complexity) spans N520–N536.

The protein belongs to the DEAD box helicase family. DDX51/DBP6 subfamily.

The protein resides in the nucleus. It localises to the nucleolus. The enzyme catalyses ATP + H2O = ADP + phosphate + H(+). Functionally, probable ATP-binding RNA helicase which may be involved in ribosome biogenesis. The protein is Probable ATP-dependent RNA helicase ddx51 (ddx51) of Dictyostelium discoideum (Social amoeba).